A 146-amino-acid chain; its full sequence is Large ribosomal subunit protein bL9 (146 aa).

This sequence belongs to the bacterial ribosomal protein bL9 family.

Functionally, binds to the 23S rRNA. This chain is Large ribosomal subunit protein bL9, found in Deinococcus deserti (strain DSM 17065 / CIP 109153 / LMG 22923 / VCD115).